The sequence spans 396 residues: KiSS-1 receptor (396 aa).

Residues 1-46 (MAAEATLGPNVSWWAPSNASGCPGCGVNASDGPGSAPRPLDAWLVP) lie on the Extracellular side of the membrane. Residues N10, N18, and N28 are each glycosylated (N-linked (GlcNAc...) asparagine). The helical transmembrane segment at 47–67 (LFFAALMLLGLVGNSLVIFVI) threads the bilayer. The Cytoplasmic segment spans residues 68 to 90 (CRHKHMQTVTNFYIANLAATDVT). Residues 91–111 (FLLCCVPFTALLYPLPTWVLG) form a helical membrane-spanning segment. The Extracellular portion of the chain corresponds to 112–120 (DFMCKFVNY). C115 and C191 are disulfide-bonded. The helical transmembrane segment at 121–138 (IQQVSVQATCATLTAMSV) threads the bilayer. Residues 139–159 (DRWYVTVFPLRALHRRTPRLA) lie on the Cytoplasmic side of the membrane. A helical transmembrane segment spans residues 160–180 (LTVSLSIWVGSAAVSAPVLAL). Residues 181–202 (HRLSPGPHTYCSEAFPSRALER) lie on the Extracellular side of the membrane. A helical transmembrane segment spans residues 203–223 (AFALYNLLALYLLPLLATCAC). The Cytoplasmic segment spans residues 224–264 (YGAMLRHLGRAAVRPAPTDGALQGQLLAQRAGAVRTKVSRL). Residues 265–285 (VAAVVLLFAACWGPIQLFLVL) form a helical membrane-spanning segment. Residues 286 to 305 (QALGPSGAWHPRSYAAYALK) are Extracellular-facing. A helical transmembrane segment spans residues 306 to 326 (IWAHCMSYSNSALNPLLYAFL). At 327 to 396 (GSHFRQAFCR…SVQDEHTAPL (70 aa)) the chain is on the cytoplasmic side. A disordered region spans residues 346 to 396 (RRPHASAHSDRAAPHSVPHSRAAHPVRVRTPEPGNPVRRSPSVQDEHTAPL).

It belongs to the G-protein coupled receptor 1 family. Highest expression levels in the cerebrum and cecum. Moderate expression in the ovary, colon and placenta. Low levels in the uterus, small intestine, and thymus. Expressed only moderately in the placenta. No expression in kidney tissues. Has a complex and abundant central nervous system expression pattern. Expressed in brain regions such as pons, midbrain, thalamus, hypothalamus, hippocampus, amygdala, cortex, frontal cortex, and striatum. No expression in the cerebellum. Persistent expression is detected in hypothalamus throughout postnatal development, with maximum expression levels at puberty in both male and female. Hypothalamic expression changed throughout the estrus cycle and is significantly increased after gonadectomy, a rise that is prevented by sex steroid replacement both in males and females.

The protein localises to the cell membrane. Functionally, receptor for metastin, a C-terminally amidated peptide of KiSS1. KiSS1 is a metastasis suppressor protein. Activation of the receptor inhibits cell proliferation and cell migration, key characteristics of tumor metastasis. The receptor is essential for normal gonadotropin-released hormone physiology and for puberty. The hypothalamic KiSS1/KISS1R system is a pivotal factor in central regulation of the gonadotropic axis at puberty and in adulthood. Analysis of the transduction pathways activated by the receptor identifies coupling to phospholipase C and intracellular calcium release through pertussis toxin-insensitive G(q) proteins. This Rattus norvegicus (Rat) protein is KiSS-1 receptor (Kiss1r).